The following is a 384-amino-acid chain: tRNA-specific 2-thiouridylase MnmA (384 aa).

Residues 13–20 (GLSGGVDS) and methionine 39 contribute to the ATP site. The tract at residues 99–101 (NPD) is interaction with target base in tRNA. Catalysis depends on cysteine 104, which acts as the Nucleophile. Cysteine 104 and cysteine 215 are joined by a disulfide. Glycine 128 lines the ATP pocket. The segment at 165 to 167 (KDQ) is interaction with tRNA. Cysteine 215 acts as the Cysteine persulfide intermediate in catalysis. Residues 333 to 334 (RY) form an interaction with tRNA region.

Belongs to the MnmA/TRMU family.

The protein localises to the cytoplasm. The catalysed reaction is S-sulfanyl-L-cysteinyl-[protein] + uridine(34) in tRNA + AH2 + ATP = 2-thiouridine(34) in tRNA + L-cysteinyl-[protein] + A + AMP + diphosphate + H(+). Functionally, catalyzes the 2-thiolation of uridine at the wobble position (U34) of tRNA, leading to the formation of s(2)U34. In Albidiferax ferrireducens (strain ATCC BAA-621 / DSM 15236 / T118) (Rhodoferax ferrireducens), this protein is tRNA-specific 2-thiouridylase MnmA.